The following is a 165-amino-acid chain: AP-3 complex subunit sigma (165 aa).

It belongs to the adaptor complexes small subunit family. As to quaternary structure, adaptor protein complex 3 (AP-3) is a heterotetramer composed of 2 large adaptins (apl5 and apl6), a medium adaptin (apm3) and a small adaptin (aps3).

It is found in the golgi apparatus. It localises to the cytoplasmic vesicle membrane. Part of the AP-3 complex, an adaptor-related complex which is not clathrin-associated. The complex is associated with the Golgi region as well as more peripheral structures. It facilitates the budding of vesicles from the Golgi membrane and may be directly involved in trafficking to the vacuole. This chain is AP-3 complex subunit sigma (aps3), found in Schizosaccharomyces pombe (strain 972 / ATCC 24843) (Fission yeast).